The chain runs to 145 residues: D-aminoacyl-tRNA deacylase (145 aa).

Positions 137–138 (GP) match the Gly-cisPro motif, important for rejection of L-amino acids motif.

It belongs to the DTD family. In terms of assembly, homodimer.

The protein resides in the cytoplasm. It carries out the reaction glycyl-tRNA(Ala) + H2O = tRNA(Ala) + glycine + H(+). It catalyses the reaction a D-aminoacyl-tRNA + H2O = a tRNA + a D-alpha-amino acid + H(+). An aminoacyl-tRNA editing enzyme that deacylates mischarged D-aminoacyl-tRNAs. Also deacylates mischarged glycyl-tRNA(Ala), protecting cells against glycine mischarging by AlaRS. Acts via tRNA-based rather than protein-based catalysis; rejects L-amino acids rather than detecting D-amino acids in the active site. By recycling D-aminoacyl-tRNA to D-amino acids and free tRNA molecules, this enzyme counteracts the toxicity associated with the formation of D-aminoacyl-tRNA entities in vivo and helps enforce protein L-homochirality. The sequence is that of D-aminoacyl-tRNA deacylase from Deinococcus radiodurans (strain ATCC 13939 / DSM 20539 / JCM 16871 / CCUG 27074 / LMG 4051 / NBRC 15346 / NCIMB 9279 / VKM B-1422 / R1).